Here is a 95-residue protein sequence, read N- to C-terminus: Co-chaperonin GroES (95 aa).

It belongs to the GroES chaperonin family. As to quaternary structure, heptamer of 7 subunits arranged in a ring. Interacts with the chaperonin GroEL.

The protein resides in the cytoplasm. In terms of biological role, together with the chaperonin GroEL, plays an essential role in assisting protein folding. The GroEL-GroES system forms a nano-cage that allows encapsulation of the non-native substrate proteins and provides a physical environment optimized to promote and accelerate protein folding. GroES binds to the apical surface of the GroEL ring, thereby capping the opening of the GroEL channel. In Syntrophotalea carbinolica (strain DSM 2380 / NBRC 103641 / GraBd1) (Pelobacter carbinolicus), this protein is Co-chaperonin GroES.